The primary structure comprises 111 residues: Probable 4-amino-4-deoxy-L-arabinose-phosphoundecaprenol flippase subunit ArnE (111 aa).

Helical transmembrane passes span 36–56 (IVLW…LWLL), 61–81 (VPVG…TLAA), and 88–108 (PVSP…VILG). Residues 40-109 (LGLALACIGL…IIGGIVILGS (70 aa)) form the EamA domain.

The protein belongs to the ArnE family. As to quaternary structure, heterodimer of ArnE and ArnF.

The protein resides in the cell inner membrane. The protein operates within bacterial outer membrane biogenesis; lipopolysaccharide biosynthesis. Functionally, translocates 4-amino-4-deoxy-L-arabinose-phosphoundecaprenol (alpha-L-Ara4N-phosphoundecaprenol) from the cytoplasmic to the periplasmic side of the inner membrane. This is Probable 4-amino-4-deoxy-L-arabinose-phosphoundecaprenol flippase subunit ArnE from Shigella flexneri serotype 5b (strain 8401).